Reading from the N-terminus, the 110-residue chain is Large ribosomal subunit protein uL22 (110 aa).

It belongs to the universal ribosomal protein uL22 family. As to quaternary structure, part of the 50S ribosomal subunit.

Functionally, this protein binds specifically to 23S rRNA; its binding is stimulated by other ribosomal proteins, e.g. L4, L17, and L20. It is important during the early stages of 50S assembly. It makes multiple contacts with different domains of the 23S rRNA in the assembled 50S subunit and ribosome. The globular domain of the protein is located near the polypeptide exit tunnel on the outside of the subunit, while an extended beta-hairpin is found that lines the wall of the exit tunnel in the center of the 70S ribosome. This is Large ribosomal subunit protein uL22 from Vibrio campbellii (strain ATCC BAA-1116).